The sequence spans 499 residues: ADP,ATP carrier protein 5 (499 aa).

11 helical membrane passes run 25-45 (LGKF…QNIL), 61-81 (IAGF…VIIY), 93-113 (IFYY…FVIY), 148-168 (YIVY…LLFW), 183-203 (FYTF…FLMM), 223-243 (ITLV…CCVL), 286-306 (LWLL…VEAV), 327-347 (LYIL…NNVM), 356-376 (AVIS…LIVF), 380-400 (ILSL…VSIG), and 468-488 (SISP…IYAV).

This sequence belongs to the ADP/ATP translocase tlc family.

Its subcellular location is the cell membrane. Functionally, provides the rickettsial cell with host ATP in exchange for rickettsial ADP. This is an obligate exchange system. This energy acquiring activity is an important component of rickettsial parasitism. The polypeptide is ADP,ATP carrier protein 5 (tlcE) (Rickettsia felis (strain ATCC VR-1525 / URRWXCal2) (Rickettsia azadi)).